A 355-amino-acid chain; its full sequence is IgG receptor FcRn large subunit p51 (355 aa).

The signal sequence occupies residues 1–24 (MRVPRSQPWGLALLLLLLPGTLRA). Residues 25–111 (AESHRSLLYH…ALKVFGDRDS (87 aa)) are alpha-1. Topologically, residues 25–300 (AESHRSLLYH…LESPAKSSVP (276 aa)) are extracellular. The segment at 112 to 201 (YTLQGLLGCE…ERGRGNLEWK (90 aa)) is alpha-2. Asn126 carries N-linked (GlcNAc...) asparagine glycosylation. The segment at 202–291 (EPPSMRLKAR…GPAQPLTVEL (90 aa)) is alpha-3. The Ig-like C1-type domain occupies 203 to 292 (PPSMRLKARP…PAQPLTVELE (90 aa)). A disulfide bridge links Cys222 with Cys276. Residues 293–298 (SPAKSS) are connecting peptide. A helical membrane pass occupies residues 301 to 321 (VIGISIGFLLLMTVAAGGALL). The Cytoplasmic portion of the chain corresponds to 322–355 (WRRRKGLPAPWIAFRGDDIGALLPTPGLSKDAES).

The protein belongs to the immunoglobulin superfamily. FcRn complex consists of two subunits: p51, and p14 which is equivalent to beta-2-microglobulin. It forms an MHC class I-like heterodimer. Interacts with albumin/ALB; this interaction regulates ALB homeostasis. Expressed in liver and mammary gland of non-lactating animals. Expressed in hepatocytes and in epithelial cells of portal bile ductuli. Not expressed in the brances of portal veins or hepatic arteries. Expressed in the epithelial cells of the acini and ducti in the mammary gland with expression emphasized at the apical side. Not expressed in blood vessels of mammary gland.

Its subcellular location is the cell membrane. It localises to the endosome membrane. Its function is as follows. Cell surface receptor that transfers passive humoral immunity from the mother to the newborn. Binds to the Fc region of monomeric immunoglobulin gamma and mediates its selective uptake from milk. IgG in the milk is bound at the apical surface of the intestinal epithelium. The resultant FcRn-IgG complexes are transcytosed across the intestinal epithelium and IgG is released from FcRn into blood or tissue fluids. Throughout life, contributes to effective humoral immunity by recycling IgG and extending its half-life in the circulation. Mechanistically, monomeric IgG binding to FcRn in acidic endosomes of endothelial and hematopoietic cells recycles IgG to the cell surface where it is released into the circulation. In addition of IgG, regulates homeostasis of the other most abundant circulating protein albumin/ALB. The polypeptide is IgG receptor FcRn large subunit p51 (Camelus dromedarius (Dromedary)).